Consider the following 198-residue polypeptide: MTDATTNGAIGAGTLTGESLRKFFERDAITVSRDLLGCHLTVDGVGGRITETEAYFPDDEASHSFRGPTKRNGAMYGKPGNVYIYRIYGVYWCLNFVCHPGSAALIRALEPETGIPRMMERRGTDMLTSLCSGPGKLCQALGIDIAINDRLLDRAPYAIAPSAPVPIVSGKRIGITKNAEAPWRFGIQGSRFLSKPFR.

The protein belongs to the DNA glycosylase MPG family.

The polypeptide is Putative 3-methyladenine DNA glycosylase (Rhizobium johnstonii (strain DSM 114642 / LMG 32736 / 3841) (Rhizobium leguminosarum bv. viciae)).